The following is a 62-amino-acid chain: Potassium channel toxin alpha-KTx Tx790 (62 aa).

Positions 1–18 (MQKLFIVLVLFCILRLDA) are cleaved as a signal peptide. Cystine bridges form between cysteine 28/cysteine 46, cysteine 33/cysteine 59, and cysteine 37/cysteine 61.

It belongs to the short scorpion toxin superfamily. Potassium channel inhibitor family. Alpha-KTx 23 subfamily. Expressed by the venom gland.

It localises to the secreted. Its function is as follows. May block potassium channels. The polypeptide is Potassium channel toxin alpha-KTx Tx790 (Buthus israelis (Israeli scorpion)).